The following is a 521-amino-acid chain: Myocyte-specific enhancer factor 2D (521 aa).

Residues 3–57 (RKKIQIQRITDERNRQVTFTKRKFGLMKKAYELSVLCDCEIALIIFNHSNKLFQY) form the MADS-box domain. The mef2-type DNA-binding region spans 58–86 (ASTDMDKVLLKYTEYNEPHESRTNADIIE). Serine 98, serine 106, and serine 110 each carry phosphoserine. The residue at position 121 (serine 121) is a Phosphoserine; by PKA. The disordered stretch occupies residues 174–207 (TDPRLLSPQQPALQRNSVSPGLPQRPASAGAMLG). Serine 180 is modified (phosphoserine; by MAPK7). The span at 180–192 (SPQQPALQRNSVS) shows a compositional bias: polar residues. Serine 190 carries the phosphoserine; by PKA modification. The residue at position 231 (serine 231) is a Phosphoserine. The disordered stretch occupies residues 244-266 (NKVIPAKSPPPPTHSTQLGAPSR). Lysine 245 is modified (N6-acetyllysine). Serine 251 bears the Phosphoserine mark. The interval 286 to 292 (TEDHLDL) is beta domain. 2 disordered regions span residues 357–407 (SLGN…QSHL) and 437–521 (SIKS…WTLK). The segment covering 373 to 400 (PQQPQPPQQQPPQPQQPQPQQPQQPQQP) has biased composition (pro residues). Residue lysine 439 is modified to N6-acetyllysine; alternate. Residue lysine 439 forms a Glycyl lysine isopeptide (Lys-Gly) (interchain with G-Cter in SUMO); alternate linkage. The residue at position 444 (serine 444) is a Phosphoserine.

It belongs to the MEF2 family. Interacts with MYOG. Forms a complex with class II HDACs in undifferentiating cells. On myogenic differentiation, HDACs are released into the cytoplasm allowing MEF2s to interact with other proteins for activation. Interacts with HDAC4 (in undifferentiating cells); the interaction translocates MEF2D to nuclear dots. Forms a heterodimer with MEF2A. Interacts with MAPK7; the interaction phosphorylates but does not activate MEF2D. Interacts with CCAR2 and HDAC3. Phosphorylated on Ser-444 by CDK5 is required for Lys-439 sumoylation and inhibits transcriptional activity. In neurons, enhanced CDK5 activity induced by neurotoxins promotes caspase 3-mediated cleavage leading to neuron apoptosis. Phosphorylation on Ser-180 can be enhanced by EGF. Phosphorylated and activated by CaMK4. Post-translationally, acetylated on Lys-439 by CREBBP. Acetylated by EP300. Deacetylated by SIRT1 and HDAC3. In terms of processing, sumoylated on Lys-439 with SUMO2 but not SUMO1; which inhibits transcriptional activity and myogenic activity. Desumoylated by SENP3. Proteolytically cleaved in cerebellar granule neurons on several sites by caspase 7 following neurotoxicity. Preferentially cleaves the CDK5-mediated hyperphosphorylated form which leads to neuron apoptosis and transcriptional inactivation.

The protein resides in the nucleus. Its function is as follows. Transcriptional activator which binds specifically to the MEF2 element, 5'-YTA[AT](4)TAR-3', found in numerous muscle-specific, growth factor- and stress-induced genes. Mediates cellular functions not only in skeletal and cardiac muscle development, but also in neuronal differentiation and survival. Plays diverse roles in the control of cell growth, survival and apoptosis via p38 MAPK signaling in muscle-specific and/or growth factor-related transcription. Plays a critical role in the regulation of neuronal apoptosis. The sequence is that of Myocyte-specific enhancer factor 2D (MEF2D) from Homo sapiens (Human).